A 586-amino-acid chain; its full sequence is Arrestin-related trafficking adapter 5 (586 aa).

2 disordered regions span residues 123–145 (GENA…DMDT) and 182–217 (ENGV…YSNR). A compositionally biased stretch (polar residues) spans 126 to 145 (AENQHNSSSGRSTSNQDMDT). Positions 199–216 (SRSSSSNTLNNNSHSYSN) are enriched in low complexity. K364 participates in a covalent cross-link: Glycyl lysine isopeptide (Lys-Gly) (interchain with G-Cter in ubiquitin).

This sequence belongs to the arrestin family. Interacts with RSP5. In terms of processing, ubiquitinated by RSP5.

In terms of biological role, may regulate endocytosis by recruiting RSP5 ubiquitin ligase activity to specific plasma membrane proteins in response to extracellular stimuli. This chain is Arrestin-related trafficking adapter 5 (ART5), found in Saccharomyces cerevisiae (strain ATCC 204508 / S288c) (Baker's yeast).